The sequence spans 173 residues: Translation initiation factor IF-3 (173 aa).

This sequence belongs to the IF-3 family. As to quaternary structure, monomer.

The protein localises to the cytoplasm. In terms of biological role, IF-3 binds to the 30S ribosomal subunit and shifts the equilibrium between 70S ribosomes and their 50S and 30S subunits in favor of the free subunits, thus enhancing the availability of 30S subunits on which protein synthesis initiation begins. The polypeptide is Translation initiation factor IF-3 (Lactiplantibacillus plantarum (strain ATCC BAA-793 / NCIMB 8826 / WCFS1) (Lactobacillus plantarum)).